Consider the following 317-residue polypeptide: tRNA pseudouridine synthase B (317 aa).

The active-site Nucleophile is D47.

Belongs to the pseudouridine synthase TruB family. Type 1 subfamily.

The enzyme catalyses uridine(55) in tRNA = pseudouridine(55) in tRNA. Its function is as follows. Responsible for synthesis of pseudouridine from uracil-55 in the psi GC loop of transfer RNAs. This chain is tRNA pseudouridine synthase B, found in Vibrio atlanticus (strain LGP32) (Vibrio splendidus (strain Mel32)).